A 380-amino-acid chain; its full sequence is Putative 12-oxophytodienoate reductase 4 (380 aa).

FMN is bound by residues 36–38 (PLT), Ala69, and Gln111. Residue 183–186 (HGAH) participates in substrate binding. Tyr188 acts as the Proton donor in catalysis. Residue Arg235 participates in FMN binding. Position 276 (Arg276) interacts with substrate. FMN-binding positions include Gly306 and 327 to 328 (GR).

It belongs to the NADH:flavin oxidoreductase/NADH oxidase family. FMN serves as cofactor.

Putative oxophytodienoate reductase that may be involved in the biosynthesis or metabolism of oxylipin signaling molecules. This chain is Putative 12-oxophytodienoate reductase 4 (OPR4), found in Oryza sativa subsp. japonica (Rice).